The following is a 229-amino-acid chain: UPF0228 protein MA_3119 (229 aa).

Residues 35-66 (STPVNTSTPVNTSTPVNTSTPVNTSTPVSTST) show a composition bias toward low complexity. Residues 35–67 (STPVNTSTPVNTSTPVNTSTPVNTSTPVSTSTI) are disordered.

This sequence belongs to the UPF0228 family.

This Methanosarcina acetivorans (strain ATCC 35395 / DSM 2834 / JCM 12185 / C2A) protein is UPF0228 protein MA_3119.